Here is a 682-residue protein sequence, read N- to C-terminus: DNA-directed RNA polymerase subunit beta' (682 aa).

The Zn(2+) site is built by C69, C71, C87, and C90. Mg(2+)-binding residues include D489, D491, and D493.

This sequence belongs to the RNA polymerase beta' chain family. RpoC1 subfamily. As to quaternary structure, in plastids the minimal PEP RNA polymerase catalytic core is composed of four subunits: alpha, beta, beta', and beta''. When a (nuclear-encoded) sigma factor is associated with the core the holoenzyme is formed, which can initiate transcription. It depends on Mg(2+) as a cofactor. The cofactor is Zn(2+).

It is found in the plastid. The protein resides in the chloroplast. It catalyses the reaction RNA(n) + a ribonucleoside 5'-triphosphate = RNA(n+1) + diphosphate. In terms of biological role, DNA-dependent RNA polymerase catalyzes the transcription of DNA into RNA using the four ribonucleoside triphosphates as substrates. In Acorus calamus var. americanus (American sweet flag), this protein is DNA-directed RNA polymerase subunit beta'.